The primary structure comprises 1207 residues: DNA-directed RNA polymerase subunit beta (1207 aa).

This sequence belongs to the RNA polymerase beta chain family. As to quaternary structure, the RNAP catalytic core consists of 2 alpha, 1 beta, 1 beta' and 1 omega subunit. When a sigma factor is associated with the core the holoenzyme is formed, which can initiate transcription.

It catalyses the reaction RNA(n) + a ribonucleoside 5'-triphosphate = RNA(n+1) + diphosphate. In terms of biological role, DNA-dependent RNA polymerase catalyzes the transcription of DNA into RNA using the four ribonucleoside triphosphates as substrates. This chain is DNA-directed RNA polymerase subunit beta, found in Enterococcus faecalis (strain ATCC 700802 / V583).